A 66-amino-acid chain; its full sequence is UPF0370 protein YpfN (66 aa).

A helical transmembrane segment spans residues 4–24 (LAKYWWILVIVFLVGVLLNVI). A disordered region spans residues 39-66 (KPELPPHRDFNDKWDDDDDWPKKDQPKK). Over residues 42–51 (LPPHRDFNDK) the composition is skewed to basic and acidic residues.

The protein belongs to the UPF0370 family.

It is found in the cell membrane. In Escherichia coli O139:H28 (strain E24377A / ETEC), this protein is UPF0370 protein YpfN.